Here is a 200-residue protein sequence, read N- to C-terminus: GTP cyclohydrolase-2 (200 aa).

Position 50–54 (50–54 (RIHSE)) interacts with GTP. 3 residues coordinate Zn(2+): cysteine 55, cysteine 66, and cysteine 68. Residues glutamine 71, 93 to 95 (EGR), and threonine 115 each bind GTP. Aspartate 127 (proton acceptor) is an active-site residue. Arginine 129 (nucleophile) is an active-site residue. 2 residues coordinate GTP: threonine 150 and lysine 155.

Belongs to the GTP cyclohydrolase II family. Requires Zn(2+) as cofactor.

The enzyme catalyses GTP + 4 H2O = 2,5-diamino-6-hydroxy-4-(5-phosphoribosylamino)-pyrimidine + formate + 2 phosphate + 3 H(+). It participates in cofactor biosynthesis; riboflavin biosynthesis; 5-amino-6-(D-ribitylamino)uracil from GTP: step 1/4. Its function is as follows. Catalyzes the conversion of GTP to 2,5-diamino-6-ribosylamino-4(3H)-pyrimidinone 5'-phosphate (DARP), formate and pyrophosphate. The chain is GTP cyclohydrolase-2 from Acinetobacter baylyi (strain ATCC 33305 / BD413 / ADP1).